Here is a 594-residue protein sequence, read N- to C-terminus: Elongation factor 4 (594 aa).

The tr-type G domain occupies 2-184; that stretch reads KNIRNFSIIA…TIVAKVPAPE (183 aa). Residues 14 to 19 and 131 to 134 each bind GTP; these read DHGKST and NKID.

Belongs to the TRAFAC class translation factor GTPase superfamily. Classic translation factor GTPase family. LepA subfamily.

The protein resides in the cell inner membrane. It catalyses the reaction GTP + H2O = GDP + phosphate + H(+). In terms of biological role, required for accurate and efficient protein synthesis under certain stress conditions. May act as a fidelity factor of the translation reaction, by catalyzing a one-codon backward translocation of tRNAs on improperly translocated ribosomes. Back-translocation proceeds from a post-translocation (POST) complex to a pre-translocation (PRE) complex, thus giving elongation factor G a second chance to translocate the tRNAs correctly. Binds to ribosomes in a GTP-dependent manner. The protein is Elongation factor 4 of Francisella philomiragia subsp. philomiragia (strain ATCC 25017 / CCUG 19701 / FSC 153 / O#319-036).